Here is a 151-residue protein sequence, read N- to C-terminus: Deoxyuridine 5'-triphosphate nucleotidohydrolase (151 aa).

Residues Arg-70 to Gly-72, Asn-83, Leu-87 to Asp-89, and Met-97 contribute to the substrate site.

It belongs to the dUTPase family. It depends on Mg(2+) as a cofactor.

The catalysed reaction is dUTP + H2O = dUMP + diphosphate + H(+). Its pathway is pyrimidine metabolism; dUMP biosynthesis; dUMP from dCTP (dUTP route): step 2/2. This enzyme is involved in nucleotide metabolism: it produces dUMP, the immediate precursor of thymidine nucleotides and it decreases the intracellular concentration of dUTP so that uracil cannot be incorporated into DNA. This is Deoxyuridine 5'-triphosphate nucleotidohydrolase from Azotobacter vinelandii (strain DJ / ATCC BAA-1303).